Consider the following 176-residue polypeptide: Urease accessory protein UreE (176 aa).

The segment at 134–176 (EAGAYGSGGHHHHGESSQGHAHGPLAPIPVHQKIHRPSDIPSR) is disordered.

Belongs to the UreE family.

The protein resides in the cytoplasm. Its function is as follows. Involved in urease metallocenter assembly. Binds nickel. Probably functions as a nickel donor during metallocenter assembly. The polypeptide is Urease accessory protein UreE (Nitrosospira multiformis (strain ATCC 25196 / NCIMB 11849 / C 71)).